The following is a 754-amino-acid chain: 5-methyltetrahydropteroyltriglutamate--homocysteine methyltransferase (754 aa).

Residues Arg15 to Lys18 and Lys114 contribute to the 5-methyltetrahydropteroyltri-L-glutamate site. L-homocysteine is bound by residues Ile430–Ser432 and Glu483. L-methionine is bound by residues Ile430 to Ser432 and Glu483. 5-methyltetrahydropteroyltri-L-glutamate is bound by residues Arg514–Cys515 and Trp560. Asp598 serves as a coordination point for L-homocysteine. L-methionine is bound at residue Asp598. Glu604 is a 5-methyltetrahydropteroyltri-L-glutamate binding site. His641, Cys643, and Glu665 together coordinate Zn(2+). The Proton donor role is filled by His694. Position 726 (Cys726) interacts with Zn(2+).

It belongs to the vitamin-B12 independent methionine synthase family. Zn(2+) serves as cofactor.

The enzyme catalyses 5-methyltetrahydropteroyltri-L-glutamate + L-homocysteine = tetrahydropteroyltri-L-glutamate + L-methionine. It participates in amino-acid biosynthesis; L-methionine biosynthesis via de novo pathway; L-methionine from L-homocysteine (MetE route): step 1/1. In terms of biological role, catalyzes the transfer of a methyl group from 5-methyltetrahydrofolate to homocysteine resulting in methionine formation. The protein is 5-methyltetrahydropteroyltriglutamate--homocysteine methyltransferase of Campylobacter jejuni subsp. jejuni serotype O:2 (strain ATCC 700819 / NCTC 11168).